We begin with the raw amino-acid sequence, 293 residues long: Bifunctional protein FolD 1 (293 aa).

NADP(+)-binding positions include 174 to 176 and Thr-240; that span reads GRS.

This sequence belongs to the tetrahydrofolate dehydrogenase/cyclohydrolase family. In terms of assembly, homodimer.

It catalyses the reaction (6R)-5,10-methylene-5,6,7,8-tetrahydrofolate + NADP(+) = (6R)-5,10-methenyltetrahydrofolate + NADPH. The enzyme catalyses (6R)-5,10-methenyltetrahydrofolate + H2O = (6R)-10-formyltetrahydrofolate + H(+). The protein operates within one-carbon metabolism; tetrahydrofolate interconversion. Functionally, catalyzes the oxidation of 5,10-methylenetetrahydrofolate to 5,10-methenyltetrahydrofolate and then the hydrolysis of 5,10-methenyltetrahydrofolate to 10-formyltetrahydrofolate. The polypeptide is Bifunctional protein FolD 1 (Saccharopolyspora erythraea (strain ATCC 11635 / DSM 40517 / JCM 4748 / NBRC 13426 / NCIMB 8594 / NRRL 2338)).